The following is a 432-amino-acid chain: Peptidase B (432 aa).

Lys-196 and Asp-201 together coordinate Mn(2+). Lys-208 is a catalytic residue. Mn(2+) contacts are provided by Asp-219, Asp-278, and Glu-280. Arg-282 is a catalytic residue.

The protein belongs to the peptidase M17 family. Homohexamer. Requires Mn(2+) as cofactor.

It localises to the cytoplasm. It carries out the reaction Release of an N-terminal amino acid, Xaa, from a peptide or arylamide. Xaa is preferably Glu or Asp but may be other amino acids, including Leu, Met, His, Cys and Gln.. In terms of biological role, probably plays an important role in intracellular peptide degradation. The sequence is that of Peptidase B from Vibrio parahaemolyticus serotype O3:K6 (strain RIMD 2210633).